A 53-amino-acid polypeptide reads, in one-letter code: uncharacterized protein (53 aa).

The helical transmembrane segment at 20-42 (ILFPVLLVFDTILIVVGIALILF) threads the bilayer.

The protein localises to the membrane. This is an uncharacterized protein from Archaeoglobus fulgidus (strain ATCC 49558 / DSM 4304 / JCM 9628 / NBRC 100126 / VC-16).